Here is a 176-residue protein sequence, read N- to C-terminus: Dual-action ribosomal maturation protein DarP (176 aa).

Positions 1–10 (MTVPNHQQDI) are enriched in polar residues. The interval 1–22 (MTVPNHQQDISDSDLESRPSKT) is disordered.

The protein belongs to the DarP family.

It localises to the cytoplasm. Member of a network of 50S ribosomal subunit biogenesis factors which assembles along the 30S-50S interface, preventing incorrect 23S rRNA structures from forming. Promotes peptidyl transferase center (PTC) maturation. The chain is Dual-action ribosomal maturation protein DarP from Nitrosomonas eutropha (strain DSM 101675 / C91 / Nm57).